The following is a 166-amino-acid chain: Large ribosomal subunit protein uL10 (166 aa).

It belongs to the universal ribosomal protein uL10 family. Part of the ribosomal stalk of the 50S ribosomal subunit. The N-terminus interacts with L11 and the large rRNA to form the base of the stalk. The C-terminus forms an elongated spine to which L12 dimers bind in a sequential fashion forming a multimeric L10(L12)X complex.

In terms of biological role, forms part of the ribosomal stalk, playing a central role in the interaction of the ribosome with GTP-bound translation factors. The polypeptide is Large ribosomal subunit protein uL10 (Lactobacillus johnsonii (strain CNCM I-12250 / La1 / NCC 533)).